We begin with the raw amino-acid sequence, 330 residues long: 7,8-didemethyl-8-hydroxy-5-deazariboflavin synthase (330 aa).

Residues 5–245 form the Radical SAM core domain; that stretch reads VTFSRNVFIP…SDVAVQVAPN (241 aa). Residues C19, C23, and C26 each coordinate [4Fe-4S] cluster.

Belongs to the radical SAM superfamily. CofG family. In terms of assembly, consists of two subunits, CofG and CofH. It depends on [4Fe-4S] cluster as a cofactor.

It carries out the reaction 5-amino-5-(4-hydroxybenzyl)-6-(D-ribitylimino)-5,6-dihydrouracil + S-adenosyl-L-methionine = 7,8-didemethyl-8-hydroxy-5-deazariboflavin + 5'-deoxyadenosine + L-methionine + NH4(+) + H(+). The protein operates within cofactor biosynthesis; coenzyme F0 biosynthesis. In terms of biological role, catalyzes the radical-mediated synthesis of 7,8-didemethyl-8-hydroxy-5-deazariboflavin from 5-amino-5-(4-hydroxybenzyl)-6-(D-ribitylimino)-5,6-dihydrouracil. This chain is 7,8-didemethyl-8-hydroxy-5-deazariboflavin synthase, found in Methanococcoides burtonii (strain DSM 6242 / NBRC 107633 / OCM 468 / ACE-M).